Consider the following 106-residue polypeptide: Replication restart protein PriB (106 aa).

Positions 4-103 (MNRLVLSGTV…LHAEQIELID (100 aa)) constitute an SSB domain.

Belongs to the PriB family. In terms of assembly, homodimer. Interacts with PriA and DnaT. Component of the replication restart primosome. Primosome assembly occurs via a 'hand-off' mechanism. PriA binds to replication forks, subsequently PriB then DnaT bind; DnaT then displaces ssDNA to generate the helicase loading substrate.

Involved in the restart of stalled replication forks, which reloads the replicative helicase on sites other than the origin of replication; the PriA-PriB pathway is the major replication restart pathway. During primosome assembly it facilitates complex formation between PriA and DnaT on DNA; stabilizes PriA on DNA. Stimulates the DNA unwinding activity of PriA helicase. This is Replication restart protein PriB from Pectobacterium atrosepticum (strain SCRI 1043 / ATCC BAA-672) (Erwinia carotovora subsp. atroseptica).